A 607-amino-acid chain; its full sequence is UvrABC system protein C (607 aa).

In terms of domain architecture, GIY-YIG spans 11 to 89; that stretch reads CKPGVYRFED…IKEFAPPCNV (79 aa). In terms of domain architecture, UVR spans 201 to 236; it reads SSLLESLKKKMLKASKNKEYEEAAILRDKIQAAQTV.

This sequence belongs to the UvrC family. Interacts with UvrB in an incision complex.

It is found in the cytoplasm. Its function is as follows. The UvrABC repair system catalyzes the recognition and processing of DNA lesions. UvrC both incises the 5' and 3' sides of the lesion. The N-terminal half is responsible for the 3' incision and the C-terminal half is responsible for the 5' incision. This is UvrABC system protein C from Tropheryma whipplei (strain Twist) (Whipple's bacillus).